The following is an 86-amino-acid chain: Progonadoliberin-2 (86 aa).

An N-terminal signal peptide occupies residues 1 to 24; sequence MVHICRLLVLMGMLLCLSAQFASS. The residue at position 25 (glutamine 25) is a Pyrrolidone carboxylic acid. A Glycine amide modification is found at glycine 34.

It belongs to the GnRH family.

The protein localises to the secreted. Stimulates the secretion of gonadotropins. This chain is Progonadoliberin-2 (gnrh2), found in Rutilus rutilus (Roach).